We begin with the raw amino-acid sequence, 357 residues long: Homoserine kinase (357 aa).

Lys133 is covalently cross-linked (Glycyl lysine isopeptide (Lys-Gly) (interchain with G-Cter in ubiquitin)).

It belongs to the GHMP kinase family. Homoserine kinase subfamily. In terms of assembly, homodimer.

It catalyses the reaction L-homoserine + ATP = O-phospho-L-homoserine + ADP + H(+). It participates in amino-acid biosynthesis; L-threonine biosynthesis; L-threonine from L-aspartate: step 4/5. Functionally, commits homoserine to the threonine biosynthesis pathway by catalyzing its O-phosphorylation. This chain is Homoserine kinase (THR1), found in Saccharomyces cerevisiae (strain ATCC 204508 / S288c) (Baker's yeast).